We begin with the raw amino-acid sequence, 283 residues long: Acetylglutamate kinase (283 aa).

Substrate contacts are provided by residues G63–G64, R85, and N178.

The protein belongs to the acetylglutamate kinase family. ArgB subfamily.

It is found in the cytoplasm. It catalyses the reaction N-acetyl-L-glutamate + ATP = N-acetyl-L-glutamyl 5-phosphate + ADP. Its pathway is amino-acid biosynthesis; L-arginine biosynthesis; N(2)-acetyl-L-ornithine from L-glutamate: step 2/4. Functionally, catalyzes the ATP-dependent phosphorylation of N-acetyl-L-glutamate. The protein is Acetylglutamate kinase of Prochlorococcus marinus (strain AS9601).